We begin with the raw amino-acid sequence, 140 residues long: Putative nickel-responsive regulator 2 (140 aa).

Ni(2+) is bound by residues His-81, His-92, His-94, and Cys-100.

Belongs to the transcriptional regulatory CopG/NikR family. Requires Ni(2+) as cofactor.

Its function is as follows. Transcriptional regulator. This Methanosarcina acetivorans (strain ATCC 35395 / DSM 2834 / JCM 12185 / C2A) protein is Putative nickel-responsive regulator 2.